The sequence spans 629 residues: Transferrin (629 aa).

An N-terminal signal peptide occupies residues 1–21 (MTIKNVLKLAALLGVLALVQA). Transferrin-like domains are found at residues 26–366 (YRMC…ERDG) and 372–621 (MKMC…GLKC). Cystine bridges form between Cys-29/Cys-63 and Cys-38/Cys-54. Fe(3+) is bound at residue Tyr-111. 6 cysteine pairs are disulfide-bonded: Cys-135-Cys-231, Cys-184-Cys-210, Cys-207-Cys-216, Cys-270-Cys-283, Cys-375-Cys-409, and Cys-385-Cys-403. The hydrogencarbonate site is built by Thr-137, Arg-141, Val-143, and Gly-144. Fe(3+) is bound at residue Tyr-225. Fe(3+)-binding residues include Asp-408 and His-561.

Belongs to the transferrin family. In terms of assembly, monomer.

Its function is as follows. Transferrins are iron binding transport proteins which bind Fe(3+) ion in association with the binding of an anion, usually bicarbonate. This transferrin binds only one Fe(3+) ion per protein molecule. Transports iron ions from the hemolymph into the eggs during the vitellogenic stage (oogenesis). This Sarcophaga peregrina (Flesh fly) protein is Transferrin.